The sequence spans 213 residues: Protein GrpE (213 aa).

The span at methionine 1–alanine 23 shows a compositional bias: basic and acidic residues. Residues methionine 1–glycine 43 are disordered. Positions glutamate 29–glycine 43 are enriched in low complexity.

The protein belongs to the GrpE family. In terms of assembly, homodimer.

It localises to the cytoplasm. In terms of biological role, participates actively in the response to hyperosmotic and heat shock by preventing the aggregation of stress-denatured proteins, in association with DnaK and GrpE. It is the nucleotide exchange factor for DnaK and may function as a thermosensor. Unfolded proteins bind initially to DnaJ; upon interaction with the DnaJ-bound protein, DnaK hydrolyzes its bound ATP, resulting in the formation of a stable complex. GrpE releases ADP from DnaK; ATP binding to DnaK triggers the release of the substrate protein, thus completing the reaction cycle. Several rounds of ATP-dependent interactions between DnaJ, DnaK and GrpE are required for fully efficient folding. The polypeptide is Protein GrpE (Parvibaculum lavamentivorans (strain DS-1 / DSM 13023 / NCIMB 13966)).